We begin with the raw amino-acid sequence, 146 residues long: Cytochrome c-type biogenesis protein CcmE (146 aa).

Topologically, residues 1–7 are cytoplasmic; that stretch reads MQAKHQR. A helical; Signal-anchor for type II membrane protein membrane pass occupies residues 8 to 28; the sequence is LILGIIALAAVIAAGFLALVA. Residues 29–146 are Periplasmic-facing; it reads FKKQAAYFFT…AATQTTLQEK (118 aa). His-123 and Tyr-127 together coordinate heme.

This sequence belongs to the CcmE/CycJ family.

Its subcellular location is the cell inner membrane. In terms of biological role, heme chaperone required for the biogenesis of c-type cytochromes. Transiently binds heme delivered by CcmC and transfers the heme to apo-cytochromes in a process facilitated by CcmF and CcmH. This Zymomonas mobilis subsp. mobilis (strain ATCC 31821 / ZM4 / CP4) protein is Cytochrome c-type biogenesis protein CcmE.